The chain runs to 871 residues: DNA mismatch repair protein MutS 1 (871 aa).

Residue 614–621 (GPNMSGKS) participates in ATP binding.

It belongs to the DNA mismatch repair MutS family.

Functionally, this protein is involved in the repair of mismatches in DNA. It is possible that it carries out the mismatch recognition step. This protein has a weak ATPase activity. The chain is DNA mismatch repair protein MutS 1 from Halobacterium salinarum (strain ATCC 29341 / DSM 671 / R1).